Reading from the N-terminus, the 238-residue chain is MTPDEFLSALTEFDIQLSDKQIKQFERYFELLVEWNEKINLTAITEKNEVYLKHFYDSVAPILYGLITDQPVSILDIGAGAGFPSLPMKIIFPELEVTIIDSLNKRINFLSLLTEELGLENVTLLHGRAEDFGQDSNYRATFDFVTARAVARLSVLSEFTISFLKKNGNLLSLKAAQFEEELTDAKKAIAILGGKFIKEIAYELPNGDERHIAVIEKKKETPKKYPRKAGTPAKSPIK.

S-adenosyl-L-methionine is bound by residues Gly78, Phe83, 129-130 (AE), and Arg148. Residues 217–238 (KKKETPKKYPRKAGTPAKSPIK) form a disordered region.

Belongs to the methyltransferase superfamily. RNA methyltransferase RsmG family.

The protein resides in the cytoplasm. In terms of biological role, specifically methylates the N7 position of a guanine in 16S rRNA. The protein is Ribosomal RNA small subunit methyltransferase G of Lactococcus lactis subsp. cremoris (strain SK11).